Consider the following 174-residue polypeptide: Gamma-crystallin F (174 aa).

Beta/gamma crystallin 'Greek key' domains follow at residues 2–40 (GKITFYEDRGFQGRHYECSTDHSNLQPYFSRCNSVRVDS) and 41–83 (GCWM…HLIP). Residues 84-87 (HSSS) form a connecting peptide region. 2 Beta/gamma crystallin 'Greek key' domains span residues 88–128 (HRIR…HVIE) and 129–171 (GYWV…RRIM).

The protein belongs to the beta/gamma-crystallin family.

Crystallins are the dominant structural components of the vertebrate eye lens. The sequence is that of Gamma-crystallin F (Crygf) from Rattus norvegicus (Rat).